Consider the following 363-residue polypeptide: Chorismate synthase (363 aa).

2 residues coordinate NADP(+): Arg-48 and Arg-54. FMN is bound by residues 125–127 (RSS), 237–238 (NA), Gly-277, 292–296 (KPTSS), and Arg-318.

This sequence belongs to the chorismate synthase family. Homotetramer. FMNH2 is required as a cofactor.

The catalysed reaction is 5-O-(1-carboxyvinyl)-3-phosphoshikimate = chorismate + phosphate. It participates in metabolic intermediate biosynthesis; chorismate biosynthesis; chorismate from D-erythrose 4-phosphate and phosphoenolpyruvate: step 7/7. Its function is as follows. Catalyzes the anti-1,4-elimination of the C-3 phosphate and the C-6 proR hydrogen from 5-enolpyruvylshikimate-3-phosphate (EPSP) to yield chorismate, which is the branch point compound that serves as the starting substrate for the three terminal pathways of aromatic amino acid biosynthesis. This reaction introduces a second double bond into the aromatic ring system. The sequence is that of Chorismate synthase from Pseudomonas fluorescens (strain Pf0-1).